A 301-amino-acid polypeptide reads, in one-letter code: MATPTELGFSSPGGGGDDSDDNPPQKRTSKRTASETATEEETKKKKKKKTKHNTKMASPPSNRIWNEEDELSILKGLVDFRAKTGLESKIDWDAFYCYVKGSIHVKVSKCQLMSKTRKLKKKFLDQMEKIDQGNDPHFTRSSETEAFGYSMMIWRKIDAEYTNGVMDKAHQSESGEEVFEEDEEVALIDKGAAKSGKSPHEAVVVVDKITTKKNGTAGKESDDDDDDVLCAVRDAFETTMMSQGLSDYQKKLQLEKLMNLGTGKRRELSNEWKALCVEELKLNINKLRFSAKLAEAANDGK.

Residues 1-62 (MATPTELGFS…NTKMASPPSN (62 aa)) are disordered. Basic residues predominate over residues 44–54 (KKKKKKTKHNT). Positions 268–289 (LSNEWKALCVEELKLNINKLRF) are non-canonical leucine-zipper.

It belongs to the GeBP family. As to quaternary structure, homo- and heterodimers. Interacts with GEBP, GPL1 and GPL3. As to expression, expressed in the apical meristem and young leaf primordia. Detected in the vascular tissues of cotyledons and leaves, in hydathodes and in the septun of siliques, but not in roots.

It is found in the nucleus. Probable transcription factor. May play redundant roles with GEBP and GPL1 in cytokinin responses by regulating the transcript levels of type-A ARR response genes. Involved in stress responses. Plays a repressive role in cell expansion by counteracting the positive role of CPR5 in this process, but does not regulate cell proliferation or endoreduplication. The chain is GLABROUS1 enhancer-binding protein-like 2 from Arabidopsis thaliana (Mouse-ear cress).